Here is a 506-residue protein sequence, read N- to C-terminus: Trans-cinnamate 4-monooxygenase (506 aa).

A helical membrane pass occupies residues 3 to 23; it reads LLLLEKTLLALFIAATIAVTI. (E)-cinnamate-binding positions include 213 to 218 and Ala-307; that span reads RSRLAQ. Cys-448 serves as a coordination point for heme.

This sequence belongs to the cytochrome P450 family. It depends on heme as a cofactor.

Its subcellular location is the membrane. It carries out the reaction (E)-cinnamate + reduced [NADPH--hemoprotein reductase] + O2 = (E)-4-coumarate + oxidized [NADPH--hemoprotein reductase] + H2O + H(+). The protein operates within phenylpropanoid metabolism; trans-4-coumarate biosynthesis; trans-4-coumarate from trans-cinnamate: step 1/1. Catalyzes the first oxidative step of the phenylpropanoid pathway in higher plants by transforming trans-cinnamate into p-coumarate. The compounds formed by this pathway are essential components for lignification, pollination, and defense against ultraviolet light, predators and pathogens. The polypeptide is Trans-cinnamate 4-monooxygenase (CYP73A3) (Medicago sativa (Alfalfa)).